The sequence spans 227 residues: Cleavage and polyadenylation specificity factor subunit 5 (227 aa).

Residue S2 is modified to N-acetylserine. Positions 2 to 147 are necessary for RNA-binding; it reads SVVPPNRSQT…DWVIDDCIGN (146 aa). R15 carries the omega-N-methylarginine modification. N6-acetyllysine occurs at positions 23 and 29. Y40 carries the post-translational modification Phosphotyrosine. Residue K56 is modified to N6-acetyllysine. One can recognise a Nudix hydrolase domain in the interval 76–201; it reads MRRTVEGVLI…KLVAAPLFEL (126 aa). Residues 81-160 form a necessary for interactions with PAPOLA and PABPN1 region; it reads EGVLIVHEHR…PNFEPPQYPY (80 aa). An interaction with RNA region spans residues 102–104; sequence TFF. Residues 109 to 130 carry the Nudix box motif; that stretch reads GELNPGEDEVEGLKRLMTEILG.

The protein belongs to the Nudix hydrolase family. CPSF5 subfamily. In terms of assembly, homodimer (via N- and C-terminus); binds RNA as homodimer. Component of the cleavage factor Im (CFIm) complex which is a heterotetramer composed of two subunits of NUDT21/CPSF5 and two subunits of CPSF6 or CPSF7 or a heterodimer of CPSF6 and CPSF7. The cleavage factor Im (CFIm) complex associates with the CPSF and CSTF complexes to promote the assembly of the core mRNA 3'-processing machinery. Interacts with CPSF6 (via the RRM domain); this interaction is direct and enhances binding to RNA. Interacts with CPSF7. Interacts with FIP1L1; this interaction occurs in a RNA sequence-specific manner. Interacts with PABPN1. Interacts (via N-terminus) with PAPOLA (via C-terminus); this interaction is direct and diminished by acetylation. Interacts with SNRNP70. Interacts with VIRMA. Acetylated mainly by p300/CBP, recruited to the complex by CPSF6. Acetylation decreases interaction with PAPAO. Deacetylated by the class I/II HDACs, HDAC1, HDAC3 and HDAC10, and by the class III HDACs, SIRT1 and SIRT2. Expressed in testis. Expressed in male germ cells (at protein level).

The protein localises to the nucleus. It localises to the cytoplasm. Functionally, component of the cleavage factor Im (CFIm) complex that functions as an activator of the pre-mRNA 3'-end cleavage and polyadenylation processing required for the maturation of pre-mRNA into functional mRNAs. CFIm contributes to the recruitment of multiprotein complexes on specific sequences on the pre-mRNA 3'-end, so called cleavage and polyadenylation signals (pA signals). Most pre-mRNAs contain multiple pA signals, resulting in alternative cleavage and polyadenylation (APA) producing mRNAs with variable 3'-end formation. The CFIm complex acts as a key regulator of cleavage and polyadenylation site choice during APA through its binding to 5'-UGUA-3' elements localized in the 3'-untranslated region (UTR) for a huge number of pre-mRNAs. NUDT21/CPSF5 activates indirectly the mRNA 3'-processing machinery by recruiting CPSF6 and/or CPSF7. Binds to 5'-UGUA-3' elements localized upstream of pA signals that act as enhancers of pre-mRNA 3'-end processing. The homodimer mediates simultaneous sequence-specific recognition of two 5'-UGUA-3' elements within the pre-mRNA. Plays a role in somatic cell fate transitions and pluripotency by regulating widespread changes in gene expression through an APA-dependent function. Binds to chromatin. Binds to, but does not hydrolyze mono- and di-adenosine nucleotides. This is Cleavage and polyadenylation specificity factor subunit 5 from Mus musculus (Mouse).